A 437-amino-acid polypeptide reads, in one-letter code: UDP-glucosyl transferase 79L3 (437 aa).

His18 (proton acceptor) is an active-site residue. The Charge relay role is filled by Asp117. Positions 254, 312, 313, 330, 335, and 338 each coordinate UDP.

This sequence belongs to the UDP-glycosyltransferase family. In terms of tissue distribution, mainly expressed in flowers, flower buds and young leaves, and, to a lesser extent, in old leaves, stems and roots.

Its pathway is secondary metabolite biosynthesis; terpenoid biosynthesis. Functionally, component of the oleanane-type triterpene saponins (e.g. saponarioside A and saponarioside B) biosynthetic pathway, leading to the production of natural products with detergent properties used as traditional sources of soap. A glycosyltransferase that mediates the conversion of QA-triFR to QA-triFRX via the elongation of the C-28 sugar chain with a D-xylose. The protein is UDP-glucosyl transferase 79L3 of Saponaria officinalis (Common soapwort).